The sequence spans 274 residues: Fatty-acid O-methyltransferase (274 aa).

It belongs to the methyltransferase superfamily.

The catalysed reaction is a fatty acid + S-adenosyl-L-methionine = a fatty acid methyl ester + S-adenosyl-L-homocysteine. In terms of biological role, O-methyltransferase that modifies the hydroxy group of the fatty acids. Oleate is the most effective fatty acid acceptor. The polypeptide is Fatty-acid O-methyltransferase (mtf2) (Mycolicibacterium smegmatis (strain ATCC 700084 / mc(2)155) (Mycobacterium smegmatis)).